A 291-amino-acid polypeptide reads, in one-letter code: 11-beta-hydroxysteroid dehydrogenase 1 (291 aa).

Residues 1–7 lie on the Cytoplasmic side of the membrane; the sequence is MAFMKTH. The chain crosses the membrane as a helical; Signal-anchor for type II membrane protein span at residues 8-24; the sequence is LLPILGLFMAYYYYSAY. The Lumenal segment spans residues 25-291; the sequence is EEFRPEMLQG…TSYSTDGLIN (267 aa). Residues 41–67, 92–93, and 119–121 each bind NADP(+); these read GASK…TARS, TM, and NHI. N-linked (GlcNAc...) asparagine glycosylation is found at asparagine 123 and asparagine 162. A substrate-binding site is contributed by serine 170. Catalysis depends on tyrosine 183, which acts as the Proton acceptor. Position 183–187 (183–187) interacts with NADP(+); it reads YSASK. N-linked (GlcNAc...) asparagine glycosylation is present at asparagine 207. An NADP(+)-binding site is contributed by 218–222; that stretch reads IDTDT.

Belongs to the short-chain dehydrogenases/reductases (SDR) family. As to quaternary structure, homodimer. In terms of tissue distribution, abundantly expressed in the liver, followed by fibroblasts, also detected in the brain, lung, heart, and ovary, and in smaller amounts in kidney, skin, and spleen.

The protein resides in the endoplasmic reticulum membrane. The catalysed reaction is an 11beta-hydroxysteroid + NADP(+) = an 11-oxosteroid + NADPH + H(+). It catalyses the reaction cortisone + NADPH + H(+) = cortisol + NADP(+). The enzyme catalyses corticosterone + NADP(+) = 11-dehydrocorticosterone + NADPH + H(+). It carries out the reaction a 7beta-hydroxysteroid + NADP(+) = a 7-oxosteroid + NADPH + H(+). The catalysed reaction is 7-oxocholesterol + NADPH + H(+) = 7beta-hydroxycholesterol + NADP(+). It catalyses the reaction chenodeoxycholate + NADP(+) = 7-oxolithocholate + NADPH + H(+). The enzyme catalyses 7-oxolithocholate + NADPH + H(+) = ursodeoxycholate + NADP(+). It carries out the reaction glycochenodeoxycholate + NADP(+) = 7-oxoglycolithocholate + NADPH + H(+). The catalysed reaction is taurochenodeoxycholate + NADP(+) = 7-oxotaurolithocholate + NADPH + H(+). It catalyses the reaction tauroursodeoxycholate + NADP(+) = 7-oxotaurolithocholate + NADPH + H(+). The enzyme catalyses glycoursodeoxycholate + NADP(+) = 7-oxoglycolithocholate + NADPH + H(+). It carries out the reaction 7-oxopregnenolone + NADPH + H(+) = 7beta-hydroxypregnenolone + NADP(+). The catalysed reaction is 3beta,7alpha-dihydroxyandrost-5-en-17-one + NADP(+) = 3beta-hydroxy-5-androstene-7,17-dione + NADPH + H(+). It catalyses the reaction 3beta-hydroxy-5-androstene-7,17-dione + NADPH + H(+) = 3beta,7beta-dihydroxyandrost-5-en-17-one + NADP(+). The enzyme catalyses 3beta-hydroxy-5alpha-androstane-7,17-dione + NADPH + H(+) = 3beta,7beta-dihydroxy-5alpha-androstan-17-one + NADP(+). It participates in steroid metabolism. Functionally, controls the reversible conversion of biologically active glucocorticoids such as cortisone to cortisol, and 11-dehydrocorticosterone to corticosterone in the presence of NADP(H). Participates in the corticosteroid receptor-mediated anti-inflammatory response, as well as metabolic and homeostatic processes. Bidirectional in vitro, predominantly functions as a reductase in vivo, thereby increasing the concentration of active glucocorticoids. It has broad substrate specificity, besides glucocorticoids, it accepts other steroid and sterol substrates. Interconverts 7-oxo- and 7-hydroxy-neurosteroids such as 7-oxopregnenolone and 7beta-hydroxypregnenolone, 7-oxodehydroepiandrosterone (3beta-hydroxy-5-androstene-7,17-dione) and 7beta-hydroxydehydroepiandrosterone (3beta,7beta-dihydroxyandrost-5-en-17-one), among others. Catalyzes the stereo-specific conversion of the major dietary oxysterol, 7-ketocholesterol (7-oxocholesterol), into the more polar 7-beta-hydroxycholesterol metabolite. 7-oxocholesterol is one of the most important oxysterols, it participates in several events such as induction of apoptosis, accumulation in atherosclerotic lesions, lipid peroxidation, and induction of foam cell formation. Mediates the 7-oxo reduction of 7-oxolithocholate mainly to chenodeoxycholate, and to a lesser extent to ursodeoxycholate, both in its free form and when conjugated to glycine or taurine, providing a link between glucocorticoid activation and bile acid metabolism. Catalyzes the synthesis of 7-beta-25-dihydroxycholesterol from 7-oxo-25-hydroxycholesterol in vitro, which acts as a ligand for the G-protein-coupled receptor (GPCR) Epstein-Barr virus-induced gene 2 (EBI2) and may thereby regulate immune cell migration. The chain is 11-beta-hydroxysteroid dehydrogenase 1 (HSD11B1) from Saimiri sciureus (Common squirrel monkey).